Here is a 332-residue protein sequence, read N- to C-terminus: Phospholipase A2 inhibitor beta (332 aa).

Residues 1-23 form the signal peptide; that stretch reads MKSSVPSLLFVSLVMSLNSYTQQ. N35 carries an N-linked (GlcNAc...) asparagine glycan. 8 LRR repeats span residues 78 to 101, 103 to 125, 127 to 149, 150 to 173, 175 to 197, 198 to 221, 223 to 245, and 247 to 269; these read LPNL…LFRN, PELH…IFTS, TSLT…WFET, LKEL…CFDK, EKLT…MFSG, LDNL…SFHG, PKLS…VFQP, and NHXV…VAIP. N-linked (GlcNAc...) asparagine glycosylation occurs at N232. N-linked (GlcNAc...) asparagine glycosylation occurs at N272. The region spanning 280–331 is the LRRCT domain; sequence NPWACNCRMDNLLTWVKEHKIDLYSKQEIVCAFPKSFKGEEATSLHRSQICP.

Belongs to the beta-type phospholipase A2 inhibitor family. As to quaternary structure, homotrimer.

It localises to the secreted. In terms of biological role, inhibits the enzymatic activity of the basic phospholipase A2 (PLA2). The chain is Phospholipase A2 inhibitor beta from Elaphe climacophora (Japanese rat snake).